We begin with the raw amino-acid sequence, 171 residues long: S-ribosylhomocysteine lyase (171 aa).

Fe cation is bound by residues His-54, His-58, and Cys-128.

The protein belongs to the LuxS family. Homodimer. Fe cation serves as cofactor.

It carries out the reaction S-(5-deoxy-D-ribos-5-yl)-L-homocysteine = (S)-4,5-dihydroxypentane-2,3-dione + L-homocysteine. Involved in the synthesis of autoinducer 2 (AI-2) which is secreted by bacteria and is used to communicate both the cell density and the metabolic potential of the environment. The regulation of gene expression in response to changes in cell density is called quorum sensing. Catalyzes the transformation of S-ribosylhomocysteine (RHC) to homocysteine (HC) and 4,5-dihydroxy-2,3-pentadione (DPD). The sequence is that of S-ribosylhomocysteine lyase from Pectobacterium carotovorum subsp. carotovorum (strain PC1).